Reading from the N-terminus, the 85-residue chain is Large ribosomal subunit protein bL27 (85 aa).

The tract at residues 1–21 is disordered; sequence MAHKKGVGSTRNGRDSESKRL.

It belongs to the bacterial ribosomal protein bL27 family.

In Geobacter sulfurreducens (strain ATCC 51573 / DSM 12127 / PCA), this protein is Large ribosomal subunit protein bL27.